A 210-amino-acid chain; its full sequence is Imidazoleglycerol-phosphate dehydratase (210 aa).

Belongs to the imidazoleglycerol-phosphate dehydratase family.

The protein localises to the cytoplasm. The enzyme catalyses D-erythro-1-(imidazol-4-yl)glycerol 3-phosphate = 3-(imidazol-4-yl)-2-oxopropyl phosphate + H2O. The protein operates within amino-acid biosynthesis; L-histidine biosynthesis; L-histidine from 5-phospho-alpha-D-ribose 1-diphosphate: step 6/9. In Mycobacterium bovis (strain ATCC BAA-935 / AF2122/97), this protein is Imidazoleglycerol-phosphate dehydratase.